Reading from the N-terminus, the 285-residue chain is ATP synthase gamma chain (285 aa).

The protein belongs to the ATPase gamma chain family. F-type ATPases have 2 components, CF(1) - the catalytic core - and CF(0) - the membrane proton channel. CF(1) has five subunits: alpha(3), beta(3), gamma(1), delta(1), epsilon(1). CF(0) has three main subunits: a, b and c.

The protein resides in the cell membrane. Its function is as follows. Produces ATP from ADP in the presence of a proton gradient across the membrane. The gamma chain is believed to be important in regulating ATPase activity and the flow of protons through the CF(0) complex. The chain is ATP synthase gamma chain from Geobacillus kaustophilus (strain HTA426).